Reading from the N-terminus, the 37-residue chain is Large ribosomal subunit protein bL36 (37 aa).

The protein belongs to the bacterial ribosomal protein bL36 family.

The chain is Large ribosomal subunit protein bL36 from Solibacter usitatus (strain Ellin6076).